The following is a 360-amino-acid chain: Blue-light-activated histidine kinase 1 (360 aa).

A PAS domain is found at 38–109; that stretch reads LFLETTQQTR…KLREGIAAER (72 aa). The residue at position 85 (cysteine 85) is an S-4a-FMN cysteine. In terms of domain architecture, PAC spans 109-163; sequence RYTVVDLLNYRKDGIPFWNAVHVGPIYGEDGTLQYFYGSQWDITDIVAERRKAET. The residue at position 173 (histidine 173) is a Phosphohistidine; by autocatalysis. Residues 260-303 are HWE histidine kinase domain; the sequence is RSVTALGLALHELATNAVKYGALSVDAGRVEISWSREDGDVTLV.

In terms of processing, FMN binds covalently to cysteine after exposure to blue light and this bond is spontaneously broken in the dark.

It carries out the reaction ATP + protein L-histidine = ADP + protein N-phospho-L-histidine.. Its function is as follows. Photosensitive kinase that is involved in increased bacterial virulence upon exposure to light. The sequence is that of Blue-light-activated histidine kinase 1 from Erythrobacter litoralis (strain HTCC2594).